The chain runs to 277 residues: Undecaprenyl-diphosphatase (277 aa).

The next 7 membrane-spanning stretches (helical) occupy residues 3 to 23 (YIIE…TEIF), 48 to 68 (LTLF…IYYF), 97 to 117 (ISYA…GLLI), 125 to 145 (LLSI…VFLL), 198 to 218 (SFLC…YDAI), 227 to 247 (IPGF…TIKI), and 257 to 277 (LIWF…LYII).

Belongs to the UppP family.

The protein resides in the cell membrane. The catalysed reaction is di-trans,octa-cis-undecaprenyl diphosphate + H2O = di-trans,octa-cis-undecaprenyl phosphate + phosphate + H(+). In terms of biological role, catalyzes the dephosphorylation of undecaprenyl diphosphate (UPP). Confers resistance to bacitracin. This is Undecaprenyl-diphosphatase from Acholeplasma laidlawii (strain PG-8A).